The following is a 261-amino-acid chain: TM2 domain-containing protein 3 (261 aa).

A signal peptide spans 1–44; sequence MEAAAEPLRSVRHLSRVLLFLSQCYILSGDGSLNLEHSQPLAQA. The Extracellular segment spans residues 45–193; it reads IKDPGPTRTF…RTFPKLLYCN (149 aa). Residues Asn101, Asn136, Asn154, Asn171, Asn183, and Asn193 are each glycosylated (N-linked (GlcNAc...) asparagine). A helical membrane pass occupies residues 194 to 214; sequence WTGGYKWSTALALSITLGGFG. The region spanning 197–244 is the TM2 domain; sequence GYKWSTALALSITLGGFGADRFYLGQWREGLGKLFSFGGLGIWTLIDV. Residues 215 to 229 lie on the Cytoplasmic side of the membrane; that stretch reads ADRFYLGQWREGLGK. The helical transmembrane segment at 230–250 threads the bilayer; sequence LFSFGGLGIWTLIDVLLIGVG. The Extracellular segment spans residues 251–261; sequence YVGPADGSLYI.

It belongs to the TM2 family.

Its subcellular location is the membrane. In Mus musculus (Mouse), this protein is TM2 domain-containing protein 3 (Tm2d3).